A 430-amino-acid polypeptide reads, in one-letter code: Small ribosomal subunit protein uS5m (430 aa).

Residues 218–282 enclose the S5 DRBM domain; sequence FDTRILEVRN…NRAVHHLHYI (65 aa).

This sequence belongs to the universal ribosomal protein uS5 family. As to quaternary structure, component of the mitochondrial small ribosomal subunit (mt-SSU). Mature mammalian 55S mitochondrial ribosomes consist of a small (28S) and a large (39S) subunit. The 28S small subunit contains a 12S ribosomal RNA (12S mt-rRNA) and 30 different proteins. The 39S large subunit contains a 16S rRNA (16S mt-rRNA), a copy of mitochondrial valine transfer RNA (mt-tRNA(Val)), which plays an integral structural role, and 52 different proteins.

The protein localises to the mitochondrion. This Homo sapiens (Human) protein is Small ribosomal subunit protein uS5m (MRPS5).